We begin with the raw amino-acid sequence, 598 residues long: Membrane protein insertase YidC (598 aa).

A helical transmembrane segment spans residues 7–27 (NYFIAIALSVLIVLGWQFLYM). The segment at 37–71 (AQEAQKAQQQTEQVQQPAAGGATPAPASGTAPSGQ) is disordered. The span at 40-71 (AQKAQQQTEQVQQPAAGGATPAPASGTAPSGQ) shows a compositional bias: low complexity. 4 consecutive transmembrane segments (helical) span residues 373–393 (FFGNFGVAILCTTIVVKALFF), 447–467 (WPVALQIPIFFSLYKVIYITI), 492–512 (LFGLLPFTAPTFLHLGVWPLI), and 538–558 (WMPLVFMFMLASFPAGLVIYW).

Belongs to the OXA1/ALB3/YidC family. Type 1 subfamily. As to quaternary structure, interacts with the Sec translocase complex via SecD. Specifically interacts with transmembrane segments of nascent integral membrane proteins during membrane integration.

Its subcellular location is the cell inner membrane. Required for the insertion and/or proper folding and/or complex formation of integral membrane proteins into the membrane. Involved in integration of membrane proteins that insert both dependently and independently of the Sec translocase complex, as well as at least some lipoproteins. Aids folding of multispanning membrane proteins. The polypeptide is Membrane protein insertase YidC (Rhizobium etli (strain CIAT 652)).